A 229-amino-acid polypeptide reads, in one-letter code: CRISPR pre-crRNA endoribonuclease Cas5d (229 aa).

This sequence belongs to the CRISPR-associated protein Cas5 family. Subtype I-C/Dvulg subfamily. Requires Does not require a metal cofactor. as cofactor.

Functionally, CRISPR (clustered regularly interspaced short palindromic repeat) is an adaptive immune system that provides protection against mobile genetic elements (viruses, transposable elements and conjugative plasmids). CRISPR clusters contain spacers, sequences complementary to antecedent mobile elements, and target invading nucleic acids. CRISPR clusters are transcribed and processed into CRISPR RNA (crRNA). This protein is a sequence-specific endonuclease that cleaves pre-crRNA into mature crRNA, possibly by an intramolecular attack of the 2'-hydroxyl group of G26 on the scissile phosphodiester, cutting the precursor 3' to G26 residue yielding 5'-hydroxyl and 2' and/or 3' ends lacking a hydroxyl group (perhaps a 2'/3' cyclic phosphodiester). Requires between 4 and 8 nt downstream of the cleavage site for both binding and cleavage of pre-crRNA. Substitution with dG at this position abolishes cleavage but not RNA binding. Does not cleave pre-crRNA associated with the M.succiniciproducens strain MBEL55E Cas5 protein (AC Q65TW5) CRISPR locus. This chain is CRISPR pre-crRNA endoribonuclease Cas5d, found in Thermus thermophilus (strain ATCC BAA-163 / DSM 7039 / HB27).